The following is a 70-amino-acid chain: MKSGIHPDYVETTVLCGCGASFTTRSTKKSGNITVEVCSQCHPFYTGKQKILDSGGRVARFEKRYGKRSK.

Zn(2+)-binding residues include cysteine 16, cysteine 18, cysteine 38, and cysteine 41.

This sequence belongs to the bacterial ribosomal protein bL31 family. Type A subfamily. In terms of assembly, part of the 50S ribosomal subunit. The cofactor is Zn(2+).

Binds the 23S rRNA. This chain is Large ribosomal subunit protein bL31, found in Mycolicibacterium gilvum (strain PYR-GCK) (Mycobacterium gilvum (strain PYR-GCK)).